Reading from the N-terminus, the 122-residue chain is UPF0102 protein CTC_01256 (122 aa).

It belongs to the UPF0102 family.

This Clostridium tetani (strain Massachusetts / E88) protein is UPF0102 protein CTC_01256.